A 1646-amino-acid chain; its full sequence is Monensin-resistant homolog 2 (1646 aa).

The protein belongs to the MON2 family.

The protein resides in the golgi apparatus. Functionally, may be required for traffic between late Golgi and early endosomes. This Caenorhabditis elegans protein is Monensin-resistant homolog 2 (mon-2).